Reading from the N-terminus, the 90-residue chain is Barstar (90 aa).

The protein belongs to the barstar family.

The protein localises to the cytoplasm. Its function is as follows. Inhibitor of the ribonuclease barnase. Forms a one-to-one non-covalent complex. In Bacillus amyloliquefaciens (Bacillus velezensis), this protein is Barstar.